The following is a 153-amino-acid chain: Small ribosomal subunit protein uS15 (153 aa).

This sequence belongs to the universal ribosomal protein uS15 family. Part of the 30S ribosomal subunit.

The polypeptide is Small ribosomal subunit protein uS15 (Sulfolobus acidocaldarius (strain ATCC 33909 / DSM 639 / JCM 8929 / NBRC 15157 / NCIMB 11770)).